Consider the following 510-residue polypeptide: Protein disulfide-isomerase (510 aa).

A signal peptide spans 1-20 (MLRRALLCLALTALFRAGAG). The Thioredoxin 1 domain maps to 27-136 (HVLVLHKGNF…IVNWLKKRTG (110 aa)). Active-site nucleophile residues include Cys-55 and Cys-58. A disulfide bond links Cys-55 and Cys-58. Residue Lys-202 is modified to N6-acetyllysine. An N6-succinyllysine mark is found at Lys-224 and Lys-273. 2 positions are modified to phosphoserine: Ser-333 and Ser-359. Residues 351-477 (GKIKPHLMSQ…FKKFLESGGQ (127 aa)) form the Thioredoxin 2 domain. Active-site nucleophile residues include Cys-399 and Cys-402. Cys-399 and Cys-402 are disulfide-bonded. A Phosphoserine modification is found at Ser-429. The interval 473 to 510 (ESGGQDGAGDDDDLEDLEEAEEPDLEEDDDQKAVKDEL) is disordered. Residues 480–502 (AGDDDDLEDLEEAEEPDLEEDDD) show a composition bias toward acidic residues. Residues 507-510 (KDEL) carry the Prevents secretion from ER motif.

Belongs to the protein disulfide isomerase family. In terms of assembly, heterodimer; heterodimerizes with the protein microsomal triglyceride transfer MTTP. Homodimer. Monomers and homotetramers may also occur. Interacts with P4HA2, forming a heterotetramer consisting of 2 alpha subunits (P4HA2) and 2 beta (P4HB), where P4HB plays the role of a structural subunit; this tetramer catalyzes the formation of 4-hydroxyproline in collagen. Also constitutes the structural subunit of the microsomal triacylglycerol transfer protein MTTP in mammalian cells. Stabilizes both enzymes and retain them in the ER without contributing to the catalytic activity. Binds UBQLN1. Interacts with ERO1B. Interacts with ILDR2. Interacts with ERN1/IRE1A (via N-terminus); the interaction is enhanced by phosphorylation of P4HB by FAM20C in response to endoplasmic reticulum stress and results in attenuation of ERN1 activity. Post-translationally, phosphorylation of Ser-359 by FAM20C is induced by endoplasmic reticulum stress and results in a functional switch from oxidoreductase to molecular chaperone. It also promotes interaction with ERN1.

Its subcellular location is the endoplasmic reticulum. It is found in the endoplasmic reticulum lumen. The protein resides in the melanosome. The protein localises to the cell membrane. The enzyme catalyses Catalyzes the rearrangement of -S-S- bonds in proteins.. This multifunctional protein catalyzes the formation, breakage and rearrangement of disulfide bonds. At the cell surface, seems to act as a reductase that cleaves disulfide bonds of proteins attached to the cell. May therefore cause structural modifications of exofacial proteins. Inside the cell, seems to form/rearrange disulfide bonds of nascent proteins. At high concentrations and following phosphorylation by FAM20C, functions as a chaperone that inhibits aggregation of misfolded proteins. At low concentrations, facilitates aggregation (anti-chaperone activity). May be involved with other chaperones in the structural modification of the TG precursor in hormone biogenesis. Also acts as a structural subunit of various enzymes such as prolyl 4-hydroxylase and microsomal triacylglycerol transfer protein MTTP. Receptor for LGALS9; the interaction retains P4HB at the cell surface of Th2 T helper cells, increasing disulfide reductase activity at the plasma membrane, altering the plasma membrane redox state and enhancing cell migration. The polypeptide is Protein disulfide-isomerase (P4HB) (Bos taurus (Bovine)).